Reading from the N-terminus, the 165-residue chain is uncharacterized protein (165 aa).

This is an uncharacterized protein from Aquifex aeolicus (strain VF5).